We begin with the raw amino-acid sequence, 172 residues long: Adrenodoxin homolog, mitochondrial (172 aa).

The N-terminal 16 residues, 1–16 (MLKIVTRAGHTARISN), are a transit peptide targeting the mitochondrion. The 2Fe-2S ferredoxin-type domain occupies 61–163 (LKITFILKDG…GIRVALPQMT (103 aa)). Positions 98, 104, 107, and 144 each coordinate [2Fe-2S] cluster.

It belongs to the adrenodoxin/putidaredoxin family. Interacts in its reduced state with the apo form of ISU1. Requires [2Fe-2S] cluster as cofactor.

Its subcellular location is the mitochondrion matrix. Its function is as follows. Iron-sulfur protein that transfers electrons in a wide variety of metabolic reactions. Involved in heme A biosynthesis and in iron-sulfur cluster assembly. Transfers electrons from adrenodoxin reductase ARH1 to heme A synthase COX15, a heme protein that catalyzes the conversion of heme O to heme A. Required for the de novo synthesis of Fe-S clusters on iron sulfur cluster assembly protein ISU1. Interact in its reduced state with ISU1 to productively deliver electrons for Fe-S cluster synthesis. Essential for coenzyme Q biosynthesis. May transfer the electrons required for the hydroxylation reaction performed by COQ6. This Saccharomyces cerevisiae (strain ATCC 204508 / S288c) (Baker's yeast) protein is Adrenodoxin homolog, mitochondrial.